An 877-amino-acid polypeptide reads, in one-letter code: Ewing's tumor-associated antigen 1 homolog (877 aa).

The segment at methionine 1–proline 82 is disordered. The span at alanine 56–glutamine 65 shows a compositional bias: basic residues. Lysine 87 is covalently cross-linked (Glycyl lysine isopeptide (Lys-Gly) (interchain with G-Cter in SUMO2)). The short motif at isoleucine 107 to serine 113 is the ATR-activation domain (AAD) element. 2 coiled-coil regions span residues lysine 185–glutamine 213 and alanine 306–glutamate 335. Residues lysine 416 and lysine 444 each participate in a glycyl lysine isopeptide (Lys-Gly) (interchain with G-Cter in SUMO2) cross-link. Positions proline 450–phenylalanine 479 are disordered. A compositionally biased stretch (basic and acidic residues) spans arginine 454 to lysine 476. The residue at position 467 (serine 467) is a Phosphoserine. Lysine 510 is covalently cross-linked (Glycyl lysine isopeptide (Lys-Gly) (interchain with G-Cter in SUMO2)). The RBM1 motif signature appears at glycine 607–glutamate 622. Disordered regions lie at residues glutamine 626–histidine 664 and alanine 818–proline 877. Residues serine 637–serine 662 are compositionally biased toward low complexity. A compositionally biased stretch (polar residues) spans alanine 818–proline 833. Over residues glutamate 840–valine 859 the composition is skewed to basic and acidic residues. The RBM2 motif motif lies at arginine 843–alanine 865. Residues threonine 868–proline 877 show a composition bias toward polar residues.

Interacts (via RBM1 motif) with RPA1. Interacts (via RBM2 motif) with RPA2. Interacts (via the ATR-activation domain motif) with ATR. Phosphorylated by ATR.

It localises to the nucleus. Functionally, replication stress response protein that accumulates at DNA damage sites and promotes replication fork progression and integrity. Recruited to stalled replication forks via interaction with the RPA complex and directly stimulates ATR kinase activity independently of TOPBP1. Probably only regulates a subset of ATR targets. The protein is Ewing's tumor-associated antigen 1 homolog of Mus musculus (Mouse).